The chain runs to 341 residues: L-threonine 3-dehydrogenase (341 aa).

Position 38 (Cys-38) interacts with Zn(2+). Residues Thr-40 and His-43 each act as charge relay system in the active site. 6 residues coordinate Zn(2+): His-63, Glu-64, Cys-93, Cys-96, Cys-99, and Cys-107. NAD(+) contacts are provided by residues Ile-175, Asp-195, Arg-200, 262–264, and 286–287; these read LGI and IY.

This sequence belongs to the zinc-containing alcohol dehydrogenase family. As to quaternary structure, homotetramer. Zn(2+) is required as a cofactor.

The protein localises to the cytoplasm. The enzyme catalyses L-threonine + NAD(+) = (2S)-2-amino-3-oxobutanoate + NADH + H(+). The protein operates within amino-acid degradation; L-threonine degradation via oxydo-reductase pathway; glycine from L-threonine: step 1/2. Catalyzes the NAD(+)-dependent oxidation of L-threonine to 2-amino-3-ketobutyrate. This Solibacter usitatus (strain Ellin6076) protein is L-threonine 3-dehydrogenase.